A 129-amino-acid chain; its full sequence is Putative zinc finger protein 702 (129 aa).

3 consecutive C2H2-type zinc fingers follow at residues 34-56, 62-84, and 90-112; these read YKCDICGKVFNQKRYLAYHHRCH, YKCNQCGKTFSYKSSLVIHKAIH, and HKCNECGKVFNQKAYLASHHRLH.

Belongs to the krueppel C2H2-type zinc-finger protein family.

Its subcellular location is the nucleus. May be involved in transcriptional regulation. The sequence is that of Putative zinc finger protein 702 (ZNF702P) from Homo sapiens (Human).